The primary structure comprises 421 residues: Enolase (421 aa).

Gln162 lines the (2R)-2-phosphoglycerate pocket. The Proton donor role is filled by Glu204. 3 residues coordinate Mg(2+): Asp241, Glu284, and Asp311. (2R)-2-phosphoglycerate contacts are provided by Lys336, Arg365, Ser366, and Lys387. Lys336 (proton acceptor) is an active-site residue.

It belongs to the enolase family. Mg(2+) serves as cofactor.

Its subcellular location is the cytoplasm. It localises to the secreted. The protein localises to the cell surface. It catalyses the reaction (2R)-2-phosphoglycerate = phosphoenolpyruvate + H2O. It functions in the pathway carbohydrate degradation; glycolysis; pyruvate from D-glyceraldehyde 3-phosphate: step 4/5. In terms of biological role, catalyzes the reversible conversion of 2-phosphoglycerate (2-PG) into phosphoenolpyruvate (PEP). It is essential for the degradation of carbohydrates via glycolysis. The polypeptide is Enolase (Nitratiruptor sp. (strain SB155-2)).